A 347-amino-acid polypeptide reads, in one-letter code: UPF0283 membrane protein ECA1987 (347 aa).

Positions 1–11 are enriched in basic and acidic residues; that stretch reads MNEPLKPRVTF. The tract at residues 1-48 is disordered; the sequence is MNEPLKPRVTFDDVSPQEPQPQLRAGLAFDEQSSTPFSPISREEEVPE. Transmembrane regions (helical) follow at residues 70 to 90, 99 to 119, and 213 to 233; these read MVMA…VQSL, WIAL…VGSL, and ESTL…FIAW.

The protein belongs to the UPF0283 family.

Its subcellular location is the cell inner membrane. In Pectobacterium atrosepticum (strain SCRI 1043 / ATCC BAA-672) (Erwinia carotovora subsp. atroseptica), this protein is UPF0283 membrane protein ECA1987.